The sequence spans 168 residues: Peptidyl-prolyl cis-trans isomerase-like 3 (168 aa).

Positions 1-156 (MSVTLHTNVG…SEIRMTGVTV (156 aa)) constitute a PPIase cyclophilin-type domain.

Belongs to the cyclophilin-type PPIase family. PPIL3 subfamily.

The catalysed reaction is [protein]-peptidylproline (omega=180) = [protein]-peptidylproline (omega=0). Its function is as follows. PPIases accelerate the folding of proteins. It catalyzes the cis-trans isomerization of proline imidic peptide bonds in oligopeptides. The sequence is that of Peptidyl-prolyl cis-trans isomerase-like 3 (CYP10) from Mycosarcoma maydis (Corn smut fungus).